A 201-amino-acid polypeptide reads, in one-letter code: Large ribosomal subunit protein uL4 (201 aa).

The tract at residues 44–68 (RAQKSRAEVSGSGRKPWRQKGTGRA) is disordered.

Belongs to the universal ribosomal protein uL4 family. In terms of assembly, part of the 50S ribosomal subunit.

One of the primary rRNA binding proteins, this protein initially binds near the 5'-end of the 23S rRNA. It is important during the early stages of 50S assembly. It makes multiple contacts with different domains of the 23S rRNA in the assembled 50S subunit and ribosome. Functionally, forms part of the polypeptide exit tunnel. The chain is Large ribosomal subunit protein uL4 from Buchnera aphidicola subsp. Acyrthosiphon pisum (strain APS) (Acyrthosiphon pisum symbiotic bacterium).